A 104-amino-acid polypeptide reads, in one-letter code: Large ribosomal subunit protein bL21c (104 aa).

Belongs to the bacterial ribosomal protein bL21 family. Part of the 50S ribosomal subunit.

It is found in the plastid. It localises to the chloroplast. This protein binds to 23S rRNA. This is Large ribosomal subunit protein bL21c from Guillardia theta (Cryptophyte).